A 121-amino-acid polypeptide reads, in one-letter code: UPF0344 protein BCE_1257 (121 aa).

A run of 4 helical transmembrane segments spans residues 6-26, 38-58, 65-85, and 92-112; these read ITAW…YSAG, LMYI…VKTA, WYGL…MVLV, and PTGA…YLGL.

It belongs to the UPF0344 family.

Its subcellular location is the cell membrane. This is UPF0344 protein BCE_1257 from Bacillus cereus (strain ATCC 10987 / NRS 248).